We begin with the raw amino-acid sequence, 510 residues long: Light-independent protochlorophyllide reductase subunit B (510 aa).

[4Fe-4S] cluster is bound at residue D36. D296 acts as the Proton donor in catalysis. Substrate is bound at residue G431–M432.

It belongs to the ChlB/BchB/BchZ family. As to quaternary structure, protochlorophyllide reductase is composed of three subunits; ChlL, ChlN and ChlB. Forms a heterotetramer of two ChlB and two ChlN subunits. It depends on [4Fe-4S] cluster as a cofactor.

Its subcellular location is the plastid. It is found in the chloroplast. It catalyses the reaction chlorophyllide a + oxidized 2[4Fe-4S]-[ferredoxin] + 2 ADP + 2 phosphate = protochlorophyllide a + reduced 2[4Fe-4S]-[ferredoxin] + 2 ATP + 2 H2O. It participates in porphyrin-containing compound metabolism; chlorophyll biosynthesis (light-independent). Its function is as follows. Component of the dark-operative protochlorophyllide reductase (DPOR) that uses Mg-ATP and reduced ferredoxin to reduce ring D of protochlorophyllide (Pchlide) to form chlorophyllide a (Chlide). This reaction is light-independent. The NB-protein (ChlN-ChlB) is the catalytic component of the complex. In Stigeoclonium helveticum (Green alga), this protein is Light-independent protochlorophyllide reductase subunit B.